The chain runs to 181 residues: Protein GrpE (181 aa).

Residues 1-20 (MENTQENPASQSAEENGSET) show a composition bias toward polar residues. The segment at 1–39 (MENTQENPASQSAEENGSETQAAQDAAPAAEAADAALAE) is disordered. A compositionally biased stretch (low complexity) spans 21–39 (QAAQDAAPAAEAADAALAE).

Belongs to the GrpE family. Homodimer.

The protein resides in the cytoplasm. In terms of biological role, participates actively in the response to hyperosmotic and heat shock by preventing the aggregation of stress-denatured proteins, in association with DnaK and GrpE. It is the nucleotide exchange factor for DnaK and may function as a thermosensor. Unfolded proteins bind initially to DnaJ; upon interaction with the DnaJ-bound protein, DnaK hydrolyzes its bound ATP, resulting in the formation of a stable complex. GrpE releases ADP from DnaK; ATP binding to DnaK triggers the release of the substrate protein, thus completing the reaction cycle. Several rounds of ATP-dependent interactions between DnaJ, DnaK and GrpE are required for fully efficient folding. This Burkholderia multivorans (strain ATCC 17616 / 249) protein is Protein GrpE.